Here is a 427-residue protein sequence, read N- to C-terminus: Mitogen-activated protein kinase 8B (427 aa).

In terms of domain architecture, Protein kinase spans 26 to 321; sequence YQNLRPIGSG…VDEALQHPYI (296 aa). ATP is bound by residues 33–40 and lysine 55; that span reads GSGAQGIV. Aspartate 151 (proton acceptor) is an active-site residue. At threonine 183 the chain carries Phosphothreonine. A TXY motif is present at residues 183–185; it reads TPY. A Phosphotyrosine modification is found at tyrosine 185. Residues 372–427 are disordered; sequence IRGQPSPIGAAVINGSPQPSSSSSINDVSSMSTEPTVASDTDSSLEASAGPLSCCR. Residues 387 to 403 are compositionally biased toward low complexity; the sequence is SPQPSSSSSINDVSSMS. The span at 404 to 417 shows a compositional bias: polar residues; the sequence is TEPTVASDTDSSLE.

Belongs to the protein kinase superfamily. CMGC Ser/Thr protein kinase family. MAP kinase subfamily. Mg(2+) is required as a cofactor. Dually phosphorylated on Thr-183 and Tyr-185, which activates the enzyme. In terms of tissue distribution, expressed at high levels in the ovary and at lower levels in brain, gill, heart, spleen, liver, kidney, muscle, bladder and gut.

It catalyses the reaction L-seryl-[protein] + ATP = O-phospho-L-seryl-[protein] + ADP + H(+). The enzyme catalyses L-threonyl-[protein] + ATP = O-phospho-L-threonyl-[protein] + ADP + H(+). Its activity is regulated as follows. Activated by threonine and tyrosine phosphorylation. In terms of biological role, responds to activation by environmental stress and pro-inflammatory cytokines by phosphorylating a number of transcription factors, primarily components of AP-1 such as c-Jun and ATF2 and thus regulates AP-1 transcriptional activity. May play a role in the regulation of the circadian clock. The polypeptide is Mitogen-activated protein kinase 8B (mapk8b) (Cyprinus carpio (Common carp)).